We begin with the raw amino-acid sequence, 183 residues long: MSIKSDRWIREQALKGMIEPFSEKQVREGVISYGLSSYGYDLRVSNEFKIFTNVNSAIIDPKNFDERSFVTVEADSVIVPPNSFALARSIEYFRIPRDVLTICVGKSTYARCGIIVNVTPFEPEWEGYVTLEISNTTPLPAKVYANEGLCQILFFQGDEPCEISYADKKGKYQNQQGIVLPKL.

DCTP contacts are provided by residues 106-111 (KSTYAR), 130-132 (TLE), Gln-151, Tyr-165, and Gln-175. Catalysis depends on Glu-132, which acts as the Proton donor/acceptor.

This sequence belongs to the dCTP deaminase family. As to quaternary structure, homotrimer.

The catalysed reaction is dCTP + H2O + H(+) = dUTP + NH4(+). Its pathway is pyrimidine metabolism; dUMP biosynthesis; dUMP from dCTP (dUTP route): step 1/2. In terms of biological role, catalyzes the deamination of dCTP to dUTP. The polypeptide is dCTP deaminase (Acidobacterium capsulatum (strain ATCC 51196 / DSM 11244 / BCRC 80197 / JCM 7670 / NBRC 15755 / NCIMB 13165 / 161)).